A 1076-amino-acid polypeptide reads, in one-letter code: Bifunctional glutamine synthetase adenylyltransferase/adenylyl-removing enzyme (1076 aa).

The interval 1 to 521 (MESSIFKPSS…LHLDIYYRPM (521 aa)) is adenylyl removase. Positions 524-1076 (VNAQMENDQI…LERNRRRAQR (553 aa)) are adenylyl transferase. The segment covering 1042–1056 (TATASAATQQPQTAP) has biased composition (low complexity). The segment at 1042–1076 (TATASAATQQPQTAPRPRMHVIAPRLERNRRRAQR) is disordered.

This sequence belongs to the GlnE family. Requires Mg(2+) as cofactor.

The catalysed reaction is [glutamine synthetase]-O(4)-(5'-adenylyl)-L-tyrosine + phosphate = [glutamine synthetase]-L-tyrosine + ADP. It carries out the reaction [glutamine synthetase]-L-tyrosine + ATP = [glutamine synthetase]-O(4)-(5'-adenylyl)-L-tyrosine + diphosphate. Involved in the regulation of glutamine synthetase GlnA, a key enzyme in the process to assimilate ammonia. When cellular nitrogen levels are high, the C-terminal adenylyl transferase (AT) inactivates GlnA by covalent transfer of an adenylyl group from ATP to specific tyrosine residue of GlnA, thus reducing its activity. Conversely, when nitrogen levels are low, the N-terminal adenylyl removase (AR) activates GlnA by removing the adenylyl group by phosphorolysis, increasing its activity. The regulatory region of GlnE binds the signal transduction protein PII (GlnB) which indicates the nitrogen status of the cell. This Bifidobacterium longum (strain NCC 2705) protein is Bifunctional glutamine synthetase adenylyltransferase/adenylyl-removing enzyme.